The sequence spans 444 residues: tRNA-2-methylthio-N(6)-dimethylallyladenosine synthase (444 aa).

An MTTase N-terminal domain is found at 4–120 (PTYYTITFGC…LGDLLAQVEA (117 aa)). [4Fe-4S] cluster-binding residues include cysteine 13, cysteine 49, cysteine 83, cysteine 155, cysteine 159, and cysteine 162. Residues 141-372 (RDSQVTAWIN…RLVAEVAAAR (232 aa)) enclose the Radical SAM core domain. The 65-residue stretch at 374–438 (ARLLGQVQEV…AFSLTGEAVT (65 aa)) folds into the TRAM domain.

This sequence belongs to the methylthiotransferase family. MiaB subfamily. Monomer. It depends on [4Fe-4S] cluster as a cofactor.

It is found in the cytoplasm. It carries out the reaction N(6)-dimethylallyladenosine(37) in tRNA + (sulfur carrier)-SH + AH2 + 2 S-adenosyl-L-methionine = 2-methylsulfanyl-N(6)-dimethylallyladenosine(37) in tRNA + (sulfur carrier)-H + 5'-deoxyadenosine + L-methionine + A + S-adenosyl-L-homocysteine + 2 H(+). Catalyzes the methylthiolation of N6-(dimethylallyl)adenosine (i(6)A), leading to the formation of 2-methylthio-N6-(dimethylallyl)adenosine (ms(2)i(6)A) at position 37 in tRNAs that read codons beginning with uridine. The polypeptide is tRNA-2-methylthio-N(6)-dimethylallyladenosine synthase (Synechococcus sp. (strain JA-2-3B'a(2-13)) (Cyanobacteria bacterium Yellowstone B-Prime)).